The following is a 116-amino-acid chain: Large ribosomal subunit protein bL19 (116 aa).

Belongs to the bacterial ribosomal protein bL19 family.

In terms of biological role, this protein is located at the 30S-50S ribosomal subunit interface and may play a role in the structure and function of the aminoacyl-tRNA binding site. In Staphylococcus aureus (strain Mu3 / ATCC 700698), this protein is Large ribosomal subunit protein bL19.